The primary structure comprises 266 residues: Large ribosomal subunit protein eL8 (266 aa).

Residues 104-130 (PETKQEKKQRLLARAEQKAAGKGDTPT) are compositionally biased toward basic and acidic residues. The interval 104–135 (PETKQEKKQRLLARAEQKAAGKGDTPTKRPPV) is disordered.

Belongs to the eukaryotic ribosomal protein eL8 family. Component of the large ribosomal subunit.

It is found in the cytoplasm. Component of the large ribosomal subunit. The ribosome is a large ribonucleoprotein complex responsible for the synthesis of proteins in the cell. The polypeptide is Large ribosomal subunit protein eL8 (RPL7A) (Gallus gallus (Chicken)).